A 309-amino-acid polypeptide reads, in one-letter code: Homoserine kinase (309 aa).

91 to 101 (PIGSGLGSSAC) provides a ligand contact to ATP.

It belongs to the GHMP kinase family. Homoserine kinase subfamily.

The protein localises to the cytoplasm. The enzyme catalyses L-homoserine + ATP = O-phospho-L-homoserine + ADP + H(+). The protein operates within amino-acid biosynthesis; L-threonine biosynthesis; L-threonine from L-aspartate: step 4/5. In terms of biological role, catalyzes the ATP-dependent phosphorylation of L-homoserine to L-homoserine phosphate. The polypeptide is Homoserine kinase (Salmonella agona (strain SL483)).